The sequence spans 479 residues: Glutamate--tRNA ligase (479 aa).

A 'HIGH' region motif is present at residues 9 to 19 (PSPTGLFHIGT). Positions 248-252 (KLSKR) match the 'KMSKS' region motif. Residue lysine 251 participates in ATP binding.

It belongs to the class-I aminoacyl-tRNA synthetase family. Glutamate--tRNA ligase type 1 subfamily. In terms of assembly, monomer.

The protein resides in the cytoplasm. The enzyme catalyses tRNA(Glu) + L-glutamate + ATP = L-glutamyl-tRNA(Glu) + AMP + diphosphate. Catalyzes the attachment of glutamate to tRNA(Glu) in a two-step reaction: glutamate is first activated by ATP to form Glu-AMP and then transferred to the acceptor end of tRNA(Glu). The sequence is that of Glutamate--tRNA ligase from Prochlorococcus marinus (strain MIT 9312).